Consider the following 115-residue polypeptide: MQPPYIQERLKSLNDIETQLCSMLQEASQVTFIFGELKRGNESVKPQFENHVKQFYERLDKSTTQLRKEIQLLDENVGTRLLPINVNKKALGQDTEKMEEQLDLLSAILDPSKSK.

The stretch at Tyr56–Ala107 forms a coiled coil.

Belongs to the mediator complex subunit 11 family. In terms of assembly, component of the Mediator complex, which is composed of at least 21 subunits that form three structurally distinct submodules. The Mediator head module contains MED6, MED8, MED11, SRB4/MED17, SRB5/MED18, ROX3/MED19, SRB2/MED20 and SRB6/MED22, the middle module contains MED1, MED4, NUT1/MED5, MED7, CSE2/MED9, NUT2/MED10, SRB7/MED21 and SOH1/MED31, and the tail module contains MED2, PGD1/MED3, RGR1/MED14, GAL11/MED15 and SIN4/MED16. The head and the middle modules interact directly with RNA polymerase II, whereas the elongated tail module interacts with gene-specific regulatory proteins. MED11 forms a heterodimer with SRB6/MED22. The MED11/22 heterodimer binds to and stabilizes the central head subunit SRB4/MED17. Interacts with TFIIH subunit RAD3.

The protein localises to the nucleus. Its function is as follows. Component of the Mediator complex, a coactivator involved in the regulated transcription of nearly all RNA polymerase II-dependent genes. Mediator functions as a bridge to convey information from gene-specific regulatory proteins to the basal RNA polymerase II transcription machinery. The Mediator complex, having a compact conformation in its free form, is recruited to promoters by direct interactions with regulatory proteins and serves for the assembly of a functional pre-initiation complex (PIC) with RNA polymerase II and the general transcription factors. The Mediator complex unfolds to an extended conformation and partially surrounds RNA polymerase II, specifically interacting with the unphosphorylated form of the C-terminal domain (CTD) of RNA polymerase II. The Mediator complex dissociates from the RNA polymerase II holoenzyme and stays at the promoter when transcriptional elongation begins. The essential MED11/22 heterodimer specifically functions in promoting stable PIC formation. This is Mediator of RNA polymerase II transcription subunit 11 (MED11) from Saccharomyces cerevisiae (strain ATCC 204508 / S288c) (Baker's yeast).